The sequence spans 407 residues: DAZ-associated protein 1 (407 aa).

M1 carries the post-translational modification N-acetylmethionine. RRM domains are found at residues 10 to 97 (GKLF…RTRP) and 113 to 190 (NKIF…RAEP). The tract at residues 74–117 (TLDGRNIDPKPCTPRGMQPERTRPKEGWQKGPRSDNSKSNKIFV) is disordered. The segment covering 91 to 111 (QPERTRPKEGWQKGPRSDNSK) has biased composition (basic and acidic residues). Position 150 is an N6-acetyllysine (K150). The span at 185–194 (VKRAEPRDSK) shows a compositional bias: basic and acidic residues. The segment at 185–407 (VKRAEPRDSK…NVQGFHPYRR (223 aa)) is disordered. Over residues 195–207 (SQAPGQPGASQWG) the composition is skewed to polar residues. A compositionally biased stretch (pro residues) spans 247-262 (GPPPAGRGAPPPPPPF). The residue at position 253 (R253) is an Omega-N-methylarginine. Residues 280–294 (FPQGYGAPPQFSFGY) show a composition bias toward low complexity. Residues 295–315 (GPPPPPPDQFAPPGVPPPPAT) are compositionally biased toward pro residues. Residues 364–379 (SDPSQQPPSYGGPSVP) are compositionally biased toward low complexity. Positions 380-393 (GSGGPPAGGSGFGR) are enriched in gly residues.

As to quaternary structure, interacts with DAZ and DAZL. In terms of processing, acetylation at Lys-150 is predominantly observed in the nuclear fraction, and may regulate nucleocytoplasmic transport. In terms of tissue distribution, mainly expressed in testis. Expressed to a lower level in thymus. Weakly or not expressed in heart, liver, brain, placenta, lung, skeletal muscle, kidney and pancreas.

It is found in the cytoplasm. It localises to the nucleus. Functionally, RNA-binding protein, which may be required during spermatogenesis. This Homo sapiens (Human) protein is DAZ-associated protein 1 (DAZAP1).